A 210-amino-acid polypeptide reads, in one-letter code: N-(5'-phosphoribosyl)anthranilate isomerase (210 aa).

It belongs to the TrpF family.

The catalysed reaction is N-(5-phospho-beta-D-ribosyl)anthranilate = 1-(2-carboxyphenylamino)-1-deoxy-D-ribulose 5-phosphate. It functions in the pathway amino-acid biosynthesis; L-tryptophan biosynthesis; L-tryptophan from chorismate: step 3/5. The protein is N-(5'-phosphoribosyl)anthranilate isomerase of Pseudomonas fluorescens (strain SBW25).